The primary structure comprises 606 residues: Chaperone protein DnaK (606 aa).

Phosphothreonine; by autocatalysis is present on T174. Residues 576 to 606 (QAAGSANPGGSQGTSQGNVYEADYKVEDDNK) form a disordered region. A compositionally biased stretch (basic and acidic residues) spans 597 to 606 (ADYKVEDDNK).

Belongs to the heat shock protein 70 family.

Acts as a chaperone. This is Chaperone protein DnaK from Caldanaerobacter subterraneus subsp. tengcongensis (strain DSM 15242 / JCM 11007 / NBRC 100824 / MB4) (Thermoanaerobacter tengcongensis).